A 358-amino-acid polypeptide reads, in one-letter code: Nicotinate-nucleotide--dimethylbenzimidazole phosphoribosyltransferase (358 aa).

The active-site Proton acceptor is glutamate 314.

Belongs to the CobT family.

The enzyme catalyses 5,6-dimethylbenzimidazole + nicotinate beta-D-ribonucleotide = alpha-ribazole 5'-phosphate + nicotinate + H(+). The protein operates within nucleoside biosynthesis; alpha-ribazole biosynthesis; alpha-ribazole from 5,6-dimethylbenzimidazole: step 1/2. Catalyzes the synthesis of alpha-ribazole-5'-phosphate from nicotinate mononucleotide (NAMN) and 5,6-dimethylbenzimidazole (DMB). This is Nicotinate-nucleotide--dimethylbenzimidazole phosphoribosyltransferase from Mycobacterium marinum (strain ATCC BAA-535 / M).